We begin with the raw amino-acid sequence, 686 residues long: L-type lectin-domain containing receptor kinase VII.1 (686 aa).

An N-terminal signal peptide occupies residues 1 to 20; it reads MKALLFLLTLFLILPNPISA. The legume-lectin like stretch occupies residues 21 to 256; the sequence is IDFIFNGFND…SHKILAWSFS (236 aa). Residues 21 to 286 are Extracellular-facing; it reads IDFIFNGFND…PKDSIVKAKW (266 aa). N29, N34, N52, N64, N111, N123, N168, N203, N224, and N259 each carry an N-linked (GlcNAc...) asparagine glycan. A helical transmembrane segment spans residues 287–307; that stretch reads FVFVLVLICFLVVALVGLVLF. The Cytoplasmic portion of the chain corresponds to 308 to 686; sequence AVVRKRLERA…SWNSSILEGR (379 aa). Residues 347-628 form the Protein kinase domain; it reads FDEKNVIGIG…VFEGDKAEIF (282 aa). ATP is bound by residues 353-361 and K376; that span reads IGIGGNGKV. D475 (proton acceptor) is an active-site residue.

The protein in the C-terminal section; belongs to the protein kinase superfamily. Ser/Thr protein kinase family. This sequence in the N-terminal section; belongs to the leguminous lectin family.

Its subcellular location is the cell membrane. It carries out the reaction L-seryl-[protein] + ATP = O-phospho-L-seryl-[protein] + ADP + H(+). The catalysed reaction is L-threonyl-[protein] + ATP = O-phospho-L-threonyl-[protein] + ADP + H(+). This Arabidopsis thaliana (Mouse-ear cress) protein is L-type lectin-domain containing receptor kinase VII.1 (LECRK71).